Reading from the N-terminus, the 109-residue chain is Hainantoxin-XVIII (109 aa).

Residues 1 to 18 (MKLSIIIIATSLVIAVVA) form the signal peptide. A propeptide spanning residues 19 to 46 (FPSKDSKAIENDKTEQRMEIVVQETARA) is cleaved from the precursor. 4 cysteine pairs are disulfide-bonded: Cys-47–Cys-62, Cys-55–Cys-68, Cys-59–Cys-108, and Cys-61–Cys-81.

The protein belongs to the neurotoxin 25 family. F7 subfamily. As to expression, expressed by the venom gland.

Its subcellular location is the secreted. Putative ion channel inhibitor. This is Hainantoxin-XVIII from Cyriopagopus hainanus (Chinese bird spider).